The sequence spans 248 residues: Undecaprenyl-diphosphatase (248 aa).

8 helical membrane passes run 4 to 24 (IVLG…SGHL), 40 to 60 (FAFL…KEIV), 74 to 94 (YSLV…GFLF), 101 to 121 (SFSN…SLFV), 134 to 154 (ISYI…FPGI), 174 to 194 (ALKY…ILET), 201 to 221 (SYIL…LLIL), and 228 to 248 (KKLK…FFVG).

Belongs to the UppP family.

It localises to the cell inner membrane. The enzyme catalyses di-trans,octa-cis-undecaprenyl diphosphate + H2O = di-trans,octa-cis-undecaprenyl phosphate + phosphate + H(+). Catalyzes the dephosphorylation of undecaprenyl diphosphate (UPP). Confers resistance to bacitracin. This chain is Undecaprenyl-diphosphatase, found in Thermosipho africanus (strain TCF52B).